A 307-amino-acid chain; its full sequence is Ribonuclease Z (307 aa).

The Zn(2+) site is built by His63, His65, Asp67, His68, His141, Asp212, and His270. Catalysis depends on Asp67, which acts as the Proton acceptor.

The protein belongs to the RNase Z family. In terms of assembly, homodimer. Zn(2+) serves as cofactor.

It carries out the reaction Endonucleolytic cleavage of RNA, removing extra 3' nucleotides from tRNA precursor, generating 3' termini of tRNAs. A 3'-hydroxy group is left at the tRNA terminus and a 5'-phosphoryl group is left at the trailer molecule.. Zinc phosphodiesterase, which displays some tRNA 3'-processing endonuclease activity. Probably involved in tRNA maturation, by removing a 3'-trailer from precursor tRNA. The polypeptide is Ribonuclease Z (Bacillus mycoides (strain KBAB4) (Bacillus weihenstephanensis)).